A 338-amino-acid polypeptide reads, in one-letter code: MO25-like protein 2 (338 aa).

This sequence belongs to the Mo25 family.

The protein resides in the cytoplasm. It is found in the cytoskeleton. Its subcellular location is the spindle pole. Its function is as follows. Regulates asymmetric cell division in Q.p neuroblast lineage. Plays a role in cell shedding during embryogenesis. The protein is MO25-like protein 2 (mop-25.2) of Caenorhabditis elegans.